Consider the following 118-residue polypeptide: Large ribosomal subunit protein bL19 (118 aa).

The protein belongs to the bacterial ribosomal protein bL19 family.

This protein is located at the 30S-50S ribosomal subunit interface and may play a role in the structure and function of the aminoacyl-tRNA binding site. This Campylobacter hominis (strain ATCC BAA-381 / DSM 21671 / CCUG 45161 / LMG 19568 / NCTC 13146 / CH001A) protein is Large ribosomal subunit protein bL19.